A 508-amino-acid polypeptide reads, in one-letter code: ADP-ribosylarginine hydrolase CG3568 (508 aa).

Positions 209, 349, 351, 353, 354, 355, 390, 441, 448, 449, 459, and 460 each coordinate ADP-D-ribose.

The enzyme catalyses N(omega)-(ADP-D-ribosyl)-L-arginyl-[protein] + H2O = ADP-D-ribose + L-arginyl-[protein]. It catalyses the reaction N(omega)-(ADP-D-ribosyl)-L-arginine + H2O = ADP-D-ribose + L-arginine. Functionally, protein ADP-ribosyl hydrolase that specifically removes mono-ADP-ribosyl modifications from protein arginine residues. The polypeptide is ADP-ribosylarginine hydrolase CG3568 (Drosophila melanogaster (Fruit fly)).